The following is a 500-amino-acid chain: Apolipoprotein N-acyltransferase (500 aa).

6 helical membrane passes run 5–25 (VAPFAAWFLAWIALAPLWIFV), 38–58 (LLLLGLTWGIGYHGVALFWIT), 74–94 (LAITIFCWSFISFYGGLFGAI), 111–131 (ILIGTAMWCVLESLWSAGPLW), 145–165 (AILHLGQISGPNLVTAAIVSV), and 185–205 (LAIATGLLITLHLIGFGLYTA). In terms of domain architecture, CN hydrolase spans 215 to 462 (LKVGIVQGNI…ETIYRRQTQN (248 aa)). The Proton acceptor role is filled by E261. K318 is an active-site residue. Residue C369 is the Nucleophile of the active site. A helical transmembrane segment spans residues 469-489 (DWFTPLLVGLSFLGWSLNIFW).

Belongs to the CN hydrolase family. Apolipoprotein N-acyltransferase subfamily.

Its subcellular location is the cell inner membrane. The enzyme catalyses N-terminal S-1,2-diacyl-sn-glyceryl-L-cysteinyl-[lipoprotein] + a glycerophospholipid = N-acyl-S-1,2-diacyl-sn-glyceryl-L-cysteinyl-[lipoprotein] + a 2-acyl-sn-glycero-3-phospholipid + H(+). The protein operates within protein modification; lipoprotein biosynthesis (N-acyl transfer). In terms of biological role, catalyzes the phospholipid dependent N-acylation of the N-terminal cysteine of apolipoprotein, the last step in lipoprotein maturation. The chain is Apolipoprotein N-acyltransferase from Nostoc sp. (strain PCC 7120 / SAG 25.82 / UTEX 2576).